A 665-amino-acid polypeptide reads, in one-letter code: UvrABC system protein B (665 aa).

Residues 25–412 form the Helicase ATP-binding domain; it reads ASIEGGNRYQ…ENRIVEQVIR (388 aa). 38–45 serves as a coordination point for ATP; the sequence is GATGTGKT. The short motif at 91–114 is the Beta-hairpin element; it reads YYDYYQPEAYIPVTDTYIEKTAAI. Positions 429–583 constitute a Helicase C-terminal domain; that stretch reads QIDDLLGEIK…VAYNKLHGIT (155 aa). The region spanning 626–661 is the UVR domain; that stretch reads PNLIDKLEAQMKEASKKLEFEEAAKLRDRIKQLRDK.

This sequence belongs to the UvrB family. In terms of assembly, forms a heterotetramer with UvrA during the search for lesions. Interacts with UvrC in an incision complex.

The protein resides in the cytoplasm. Functionally, the UvrABC repair system catalyzes the recognition and processing of DNA lesions. A damage recognition complex composed of 2 UvrA and 2 UvrB subunits scans DNA for abnormalities. Upon binding of the UvrA(2)B(2) complex to a putative damaged site, the DNA wraps around one UvrB monomer. DNA wrap is dependent on ATP binding by UvrB and probably causes local melting of the DNA helix, facilitating insertion of UvrB beta-hairpin between the DNA strands. Then UvrB probes one DNA strand for the presence of a lesion. If a lesion is found the UvrA subunits dissociate and the UvrB-DNA preincision complex is formed. This complex is subsequently bound by UvrC and the second UvrB is released. If no lesion is found, the DNA wraps around the other UvrB subunit that will check the other stand for damage. This is UvrABC system protein B from Nostoc sp. (strain PCC 7120 / SAG 25.82 / UTEX 2576).